The sequence spans 83 residues: MKSSHTSLICILMLSLVALHQCVRMKVKEIGRSNKIYIPPCFRDSCDHVLKKDCYCCGSKPDLCWEDQHYCNTHCPPLKPLIN.

The N-terminal stretch at 1–22 is a signal peptide; that stretch reads MKSSHTSLICILMLSLVALHQC. Intrachain disulfides connect C41–C56, C46–C75, C54–C71, and C57–C64.

This sequence belongs to the MEG family. In terms of tissue distribution, expressed exclusively in ovule embryo sacs and in early developing endosperms.

Maternally-contributed central cell peptide regulating suspensor development and correct auxin distribution in early developing embryos. In Arabidopsis thaliana (Mouse-ear cress), this protein is EMBRYO SURROUNDING FACTOR 1.1 (ESF1.1).